The chain runs to 189 residues: Apolipophorin-3 (189 aa).

The N-terminal stretch at 1 to 18 is a signal peptide; sequence MAAKFVVVLAACVALSHS. Residues 19-23 constitute a propeptide that is removed on maturation; the sequence is AMVRR.

Belongs to the insect apolipophorin-3 family. Equilibrium between a soluble monomer and a bound lipoprotein form. Apolipophorin-3 associates with lipophorin during lipid loading until each particle contains 9 or 14 molecules of apolipophorin-3. Hemolymph.

The protein localises to the secreted. Its function is as follows. Assists in the loading of diacylglycerol, generated from triacylglycerol stores in the fat body through the action of adipokinetic hormone, into lipophorin, the hemolymph lipoprotein. It increases the lipid carrying capacity of lipophorin by covering the expanding hydrophobic surface resulting from diacylglycerol uptake. It thus plays a critical role in the transport of lipids during flight in several species of insects. The protein is Apolipophorin-3 of Manduca sexta (Tobacco hawkmoth).